A 375-amino-acid polypeptide reads, in one-letter code: All-trans-retinol dehydrogenase [NAD(+)] ADH1B (375 aa).

Ser2 is modified (N-acetylserine). Ser23 bears the Phosphoserine mark. Position 35 is a phosphotyrosine (Tyr35). 7 residues coordinate Zn(2+): Cys47, His68, Cys98, Cys101, Cys104, Cys112, and Cys175. NAD(+)-binding positions include 200–205 (GLGGVG), Asp224, Lys229, 293–295 (VGV), and Arg370.

Belongs to the zinc-containing alcohol dehydrogenase family. In terms of assembly, homodimer or heterodimer of closely related subunits. Zn(2+) serves as cofactor. As to expression, expressed in liver.

The protein localises to the cytoplasm. The enzyme catalyses all-trans-retinol + NAD(+) = all-trans-retinal + NADH + H(+). It carries out the reaction all-trans-4-hydroxyretinol + NAD(+) = all-trans-4-hydroxyretinal + NADH + H(+). The catalysed reaction is all-trans-4-oxoretinol + NAD(+) = all-trans-4-oxoretinal + NADH + H(+). Catalyzes the NAD-dependent oxidation of all-trans-retinol and its derivatives such as all-trans-4-hydroxyretinol and may participate in retinoid metabolism. In vitro can also catalyze the NADH-dependent reduction of all-trans-retinal and its derivatives such as all-trans-4-oxoretinal. Catalyzes in the oxidative direction with higher efficiency. Has the same affinity for all-trans-4-hydroxyretinol and all-trans-4-oxoretinal. In Papio hamadryas (Hamadryas baboon), this protein is All-trans-retinol dehydrogenase [NAD(+)] ADH1B.